Here is a 63-residue protein sequence, read N- to C-terminus: Large ribosomal subunit protein bL32 (63 aa).

Residues 1–20 form a disordered region; sequence MANPKAKMSKSRRDKRRAQF. Residues 7 to 18 show a composition bias toward basic residues; it reads KMSKSRRDKRRA.

This sequence belongs to the bacterial ribosomal protein bL32 family.

This is Large ribosomal subunit protein bL32 from Chlorobaculum tepidum (strain ATCC 49652 / DSM 12025 / NBRC 103806 / TLS) (Chlorobium tepidum).